Consider the following 422-residue polypeptide: Anhydromevalonate phosphate decarboxylase (422 aa).

Mn(2+) is bound by residues asparagine 134 and glutamate 197. Aspartate 244 serves as the catalytic Proton acceptor.

This sequence belongs to the UbiD family. It depends on prenylated FMN as a cofactor. Mn(2+) is required as a cofactor.

It carries out the reaction (2E)-3-methyl-5-phosphooxypent-2-enoate + H(+) = isopentenyl phosphate + CO2. It participates in isoprenoid biosynthesis; isopentenyl diphosphate biosynthesis via mevalonate pathway. In terms of biological role, catalyzes the conversion of trans-anhydromevalonate 5-phosphate (tAHMP) into isopentenyl phosphate. Involved in the archaeal mevalonate (MVA) pathway, which provides fundamental precursors for isoprenoid biosynthesis, such as isopentenyl diphosphate (IPP) and dimethylallyl diphosphate (DMAPP). In Methanosarcina mazei (strain ATCC BAA-159 / DSM 3647 / Goe1 / Go1 / JCM 11833 / OCM 88) (Methanosarcina frisia), this protein is Anhydromevalonate phosphate decarboxylase.